We begin with the raw amino-acid sequence, 276 residues long: Small ribosomal subunit protein uS3 (276 aa).

The KH type-2 domain occupies 43 to 111 (IRQLMSTGME…QVQLNILEVK (69 aa)). Residues 218–227 (AQAASAPSRG) are compositionally biased toward low complexity. Positions 218-276 (AQAASAPSRGPRSDRGGRPGGADRGDRRRRNDRPAADAAPAAEAPAVEAAPAAAEGGQA) are disordered. The span at 228-243 (PRSDRGGRPGGADRGD) shows a compositional bias: basic and acidic residues. Over residues 253-276 (ADAAPAAEAPAVEAAPAAAEGGQA) the composition is skewed to low complexity.

It belongs to the universal ribosomal protein uS3 family. Part of the 30S ribosomal subunit. Forms a tight complex with proteins S10 and S14.

Its function is as follows. Binds the lower part of the 30S subunit head. Binds mRNA in the 70S ribosome, positioning it for translation. This chain is Small ribosomal subunit protein uS3, found in Pseudarthrobacter chlorophenolicus (strain ATCC 700700 / DSM 12829 / CIP 107037 / JCM 12360 / KCTC 9906 / NCIMB 13794 / A6) (Arthrobacter chlorophenolicus).